Reading from the N-terminus, the 2345-residue chain is Acetyl-CoA carboxylase 1 (2345 aa).

Residue Met1 is modified to N-acetylmethionine. Phosphoserine occurs at positions 5, 23, 25, 29, 34, 47, 49, and 52. Residue Thr57 is modified to Phosphothreonine. Ser77 and Ser79 each carry phosphoserine. Ser79 carries the phosphoserine; by AMPK modification. Residues 116 to 617 (VIEKVLIANN…DTGWLDRLIA (502 aa)) form the Biotin carboxylation domain. Residues 274–465 (SKRILNVPQD…LPAAQLQIAM (192 aa)) enclose the ATP-grasp domain. Residue 300 to 357 (AEEVGYPVMIKASEGGGGKGIRKVNNADDFPNLFRQVQAEVPGSPIFVMRLAKQSRHL) coordinates ATP. Mg(2+)-binding residues include Glu423, Glu436, and Asn438. Mn(2+) contacts are provided by Glu423, Glu436, and Asn438. Arg440 is a catalytic residue. Thr609 carries the post-translational modification Phosphothreonine. In terms of domain architecture, Biotinyl-binding spans 744–818 (FEKENDPSVM…DPGCVIAKMQ (75 aa)). Lys785 carries the N6-biotinyllysine modification. Phosphoserine occurs at positions 834, 1200, 1215, and 1217. At Thr1226 the chain carries Phosphothreonine. A phosphoserine mark is found at Ser1258, Ser1262, and Ser1272. At Lys1333 the chain carries N6-acetyllysine. Residues 1575–1913 (PYVTKDLLQS…SVHSSVPLLN (339 aa)) form the CoA carboxyltransferase N-terminal domain. The segment at 1575 to 2233 (PYVTKDLLQS…EDLVKKKIHN (659 aa)) is carboxyltransferase. CoA-binding residues include Arg1822, Lys2126, and Arg2128. The CoA carboxyltransferase C-terminal domain maps to 1917 to 2233 (PIDRIIEFVP…EDLVKKKIHN (317 aa)). Residue Thr2152 is modified to Phosphothreonine.

In terms of assembly, monomer, homodimer, and homotetramer. Can form filamentous polymers. Interacts in its inactive phosphorylated form with the BRCT domains of BRCA1 which prevents ACACA dephosphorylation and inhibits lipid synthesis. Interacts with MID1IP1; interaction with MID1IP1 promotes oligomerization and increases its activity. Requires Mg(2+) as cofactor. Mn(2+) serves as cofactor. Biotin is required as a cofactor. Post-translationally, phosphorylation on Ser-1262 is required for interaction with BRCA1. In terms of processing, phosphorylation at Ser-79 by AMPK inactivates enzyme activity. The biotin cofactor is covalently attached to the central biotinyl-binding domain and is required for the catalytic activity.

The protein resides in the cytoplasm. It localises to the cytosol. The enzyme catalyses hydrogencarbonate + acetyl-CoA + ATP = malonyl-CoA + ADP + phosphate + H(+). It participates in lipid metabolism; malonyl-CoA biosynthesis; malonyl-CoA from acetyl-CoA: step 1/1. Its activity is regulated as follows. Inhibited by phosphorylation. Citrate promotes oligomerization of the protein into filaments that correspond to the most active form of the carboxylase. Functionally, cytosolic enzyme that catalyzes the carboxylation of acetyl-CoA to malonyl-CoA, the first and rate-limiting step of de novo fatty acid biosynthesis. This is a 2 steps reaction starting with the ATP-dependent carboxylation of the biotin carried by the biotin carboxyl carrier (BCC) domain followed by the transfer of the carboxyl group from carboxylated biotin to acetyl-CoA. The sequence is that of Acetyl-CoA carboxylase 1 from Mus musculus (Mouse).